The following is a 264-amino-acid chain: Acyl-[acyl-carrier-protein]--UDP-N-acetylglucosamine O-acyltransferase (264 aa).

This sequence belongs to the transferase hexapeptide repeat family. LpxA subfamily. In terms of assembly, homotrimer.

Its subcellular location is the cytoplasm. The catalysed reaction is a (3R)-hydroxyacyl-[ACP] + UDP-N-acetyl-alpha-D-glucosamine = a UDP-3-O-[(3R)-3-hydroxyacyl]-N-acetyl-alpha-D-glucosamine + holo-[ACP]. It functions in the pathway glycolipid biosynthesis; lipid IV(A) biosynthesis; lipid IV(A) from (3R)-3-hydroxytetradecanoyl-[acyl-carrier-protein] and UDP-N-acetyl-alpha-D-glucosamine: step 1/6. Functionally, involved in the biosynthesis of lipid A, a phosphorylated glycolipid that anchors the lipopolysaccharide to the outer membrane of the cell. This is Acyl-[acyl-carrier-protein]--UDP-N-acetylglucosamine O-acyltransferase from Rickettsia prowazekii (strain Madrid E).